A 420-amino-acid polypeptide reads, in one-letter code: Gamma-glutamyl phosphate reductase (420 aa).

The protein belongs to the gamma-glutamyl phosphate reductase family.

Its subcellular location is the cytoplasm. It catalyses the reaction L-glutamate 5-semialdehyde + phosphate + NADP(+) = L-glutamyl 5-phosphate + NADPH + H(+). Its pathway is amino-acid biosynthesis; L-proline biosynthesis; L-glutamate 5-semialdehyde from L-glutamate: step 2/2. In terms of biological role, catalyzes the NADPH-dependent reduction of L-glutamate 5-phosphate into L-glutamate 5-semialdehyde and phosphate. The product spontaneously undergoes cyclization to form 1-pyrroline-5-carboxylate. This Streptococcus pneumoniae (strain Hungary19A-6) protein is Gamma-glutamyl phosphate reductase.